Consider the following 476-residue polypeptide: MKIMFVAAEGAPFAKTGGLGDVIGALPKSLSKKGHDVVVVMPYYDMVDQKFGDQIENLMYFYTDVGWRHQYVGVKRLSQDNVTFYFIDNQYYFYRGHVYGDWDDGERFAYFQLAALELMEKINFIPDVLHVHDYHTAMIPFLLKEKYHWIQAYNNIRTVFTIHNIEFQGQFGPEMLGDLFGVGAERYEDGTLRWNNCLNWMKAAILYSDRVTTVSPSYANEIKTPEFGKGLDQIMRMEAGKLSGIVNGIDSDLLNPETDAFLPYHFSKSNLEGKIKNKLALQENLGLPQDKNVPLIGIVSRLTDQKGFDIIASELDNMLQQDIQMVILGTGYHHFEETFSYFASRYPEKLSANITFDLRLAQQIYAASDIFMMPSAFEPCGLSQMMAMRYGSLPLVHEVGGLKDTVVAFNQFDGSGTGFSFNHFSGYWLMQTLKLALEVYNDYPEAWKKLQWQAMSKDFSWDTACVAYEQLYQQLQ.

An ADP-alpha-D-glucose-binding site is contributed by lysine 15.

The protein belongs to the glycosyltransferase 1 family. Bacterial/plant glycogen synthase subfamily.

The catalysed reaction is [(1-&gt;4)-alpha-D-glucosyl](n) + ADP-alpha-D-glucose = [(1-&gt;4)-alpha-D-glucosyl](n+1) + ADP + H(+). Its pathway is glycan biosynthesis; glycogen biosynthesis. Synthesizes alpha-1,4-glucan chains using ADP-glucose. The chain is Glycogen synthase from Streptococcus agalactiae serotype III (strain NEM316).